A 95-amino-acid polypeptide reads, in one-letter code: NADH-quinone oxidoreductase subunit K (95 aa).

The next 3 membrane-spanning stretches (helical) occupy residues 1–21 (MSYLLASALLFALGVYGVLTR), 25–45 (ILVFLSIELMLNAANLSLVGF), and 59–79 (MVIAVAAAEVAVGLGLIVAIF).

Belongs to the complex I subunit 4L family. As to quaternary structure, NDH-1 is composed of 15 different subunits. Subunits NuoA, H, J, K, L, M, N constitute the membrane sector of the complex.

The protein localises to the cell inner membrane. The catalysed reaction is a quinone + NADH + 5 H(+)(in) = a quinol + NAD(+) + 4 H(+)(out). Functionally, NDH-1 shuttles electrons from NADH, via FMN and iron-sulfur (Fe-S) centers, to quinones in the respiratory chain. The immediate electron acceptor for the enzyme in this species is believed to be a menaquinone. Couples the redox reaction to proton translocation (for every two electrons transferred, four hydrogen ions are translocated across the cytoplasmic membrane), and thus conserves the redox energy in a proton gradient. This Thermus thermophilus (strain ATCC BAA-163 / DSM 7039 / HB27) protein is NADH-quinone oxidoreductase subunit K.